The chain runs to 80 residues: Phosphoribosylformylglycinamidine synthase subunit PurS (80 aa).

It belongs to the PurS family. In terms of assembly, homodimer. Part of the FGAM synthase complex composed of 1 PurL, 1 PurQ and 2 PurS subunits.

It is found in the cytoplasm. The enzyme catalyses N(2)-formyl-N(1)-(5-phospho-beta-D-ribosyl)glycinamide + L-glutamine + ATP + H2O = 2-formamido-N(1)-(5-O-phospho-beta-D-ribosyl)acetamidine + L-glutamate + ADP + phosphate + H(+). It participates in purine metabolism; IMP biosynthesis via de novo pathway; 5-amino-1-(5-phospho-D-ribosyl)imidazole from N(2)-formyl-N(1)-(5-phospho-D-ribosyl)glycinamide: step 1/2. Its function is as follows. Part of the phosphoribosylformylglycinamidine synthase complex involved in the purines biosynthetic pathway. Catalyzes the ATP-dependent conversion of formylglycinamide ribonucleotide (FGAR) and glutamine to yield formylglycinamidine ribonucleotide (FGAM) and glutamate. The FGAM synthase complex is composed of three subunits. PurQ produces an ammonia molecule by converting glutamine to glutamate. PurL transfers the ammonia molecule to FGAR to form FGAM in an ATP-dependent manner. PurS interacts with PurQ and PurL and is thought to assist in the transfer of the ammonia molecule from PurQ to PurL. In Archaeoglobus fulgidus (strain ATCC 49558 / DSM 4304 / JCM 9628 / NBRC 100126 / VC-16), this protein is Phosphoribosylformylglycinamidine synthase subunit PurS.